A 232-amino-acid chain; its full sequence is Cytidylate kinase (232 aa).

15–23 (GPAGAGKST) contacts ATP. The disordered stretch occupies residues 164–192 (KEDPPPISQGQLAAEMKERDMRDSTRADA). Residues 178 to 189 (EMKERDMRDSTR) show a composition bias toward basic and acidic residues.

The protein belongs to the cytidylate kinase family. Type 1 subfamily.

Its subcellular location is the cytoplasm. The catalysed reaction is CMP + ATP = CDP + ADP. It carries out the reaction dCMP + ATP = dCDP + ADP. This is Cytidylate kinase from Solibacter usitatus (strain Ellin6076).